The chain runs to 324 residues: Annexin A10 (324 aa).

Annexin repeat units follow at residues 17-88 (FNPM…GLMY), 89-160 (PPPS…NLVQ), 171-243 (AMAA…AIVR), and 247-318 (DKPS…AICA).

It belongs to the annexin family.

In Mus musculus (Mouse), this protein is Annexin A10 (Anxa10).